Consider the following 376-residue polypeptide: Ribonucleoside-diphosphate reductase 1 subunit beta (376 aa).

Fe cation contacts are provided by aspartate 85, glutamate 116, and histidine 119. Residue tyrosine 123 is part of the active site. The Fe cation site is built by glutamate 205, glutamate 239, and histidine 242.

It belongs to the ribonucleoside diphosphate reductase small chain family. As to quaternary structure, tetramer of two alpha (R1) and two beta (R2) subunits. The B1 protein is a dimer of alpha subunits. A radical transfer pathway occurs between Tyr-123 of R2 and R1. Fe cation serves as cofactor.

The enzyme catalyses a 2'-deoxyribonucleoside 5'-diphosphate + [thioredoxin]-disulfide + H2O = a ribonucleoside 5'-diphosphate + [thioredoxin]-dithiol. Its function is as follows. Provides the precursors necessary for DNA synthesis. Catalyzes the biosynthesis of deoxyribonucleotides from the corresponding ribonucleotides. R2 contains the tyrosyl radical required for catalysis. The chain is Ribonucleoside-diphosphate reductase 1 subunit beta (nrdB) from Escherichia coli O157:H7.